The primary structure comprises 434 residues: MSIKNIRAREIFDSRGNPTVEVDLYTCKGLFRAAVPSGASTGIYEALELRDNDKTRYLGKGVGRAVKYVNEFLGPALCTQNLNVVEQEKIDKLMIEMDGTENKSKFGANALLGVSLAVCKAGAAEKGVPLYRHIADLAGNPEVILPVPAFNVINGGSHAGNKLAMQEFMILPVGADSFKEAMRIGAEVYHNLKNVIKEKYGKDATNVGDEGGFAPNILENKEALELLKTAINKAGYPDKIVIGMDVAASEFYRDGKYDLDFKSPDDPSRYISPDKLAELYMSFVKNYPVVSIEDPFDQDHWEAWTKFTAASGIQVVGDDLTVTNPKRIAKAVEEKACNCLLLKVNQIGTVTESLEACKLAQSNGWGVMVSHRSGETEDTFIADLVVGLCTGQIKTGAPCRSERLAKYNQLLRIEEELGSKARFAGKNFRKPVFN.

Mg(2+) is bound at residue S40. Residues H158 and E167 each coordinate substrate. E210 serves as the catalytic Proton donor. Mg(2+) is bound by residues D245, E293, and D318. Residues E293 and D318 each contribute to the substrate site. The active-site Proton acceptor is the K343. Substrate-binding positions include 370-373 (SHRS) and K394.

It belongs to the enolase family. In terms of assembly, homodimer. The cofactor is Mg(2+).

It localises to the cytoplasm. It carries out the reaction (2R)-2-phosphoglycerate = phosphoenolpyruvate + H2O. Its pathway is carbohydrate degradation; glycolysis; pyruvate from D-glyceraldehyde 3-phosphate: step 4/5. The polypeptide is Alpha-enolase (eno1) (Xenopus laevis (African clawed frog)).